The following is a 275-amino-acid chain: LIM/homeobox protein Awh (275 aa).

LIM zinc-binding domains follow at residues 6–67 (RSCA…NFGA) and 68–129 (KCSK…TVEG). The residue at position 126 (threonine 126) is a Phosphothreonine. The segment at residues 148–207 (TKRVRTTFTEEQLQVLQANFQIDSNPDGQDLERIASVTGLSKRVTQVWFQNSRARQKKHI) is a DNA-binding region (homeobox). Residues 253 to 275 (PTHESSMDELSQDSSVHCMPSEV) form a disordered region.

First detected in neuroblasts in stage 9 embryos. Expressed in all 10 abdominal segments and in the labial segment during early embryogenesis. Expressed in the stage 14 developing epithelium. By embryonic stage 16, expression is refined to the abdominal histoblasts and salivary gland imaginal ring cells. Expressed in both larval and imaginal cells between the salivary gland and the salivary gland imaginal ring, in late third instar larvae. Also expressed in specific areas of the larval wing, leg and eye-antennal disks.

It is found in the nucleus. Its function is as follows. Probable transcription factor. Required for the establishment of a subset of imaginal tissues: the abdominal histoblasts and the salivary gland imaginal rings. This is LIM/homeobox protein Awh from Drosophila melanogaster (Fruit fly).